A 156-amino-acid polypeptide reads, in one-letter code: Phospholipase A2 A2-hormotoxin-Apt1a (156 aa).

The signal sequence occupies residues 1–19 (MQLYTYFFTFSLVLILALA). A propeptide spanning residues 20–35 (DQENKSLDFTQEGGIA) is cleaved from the precursor. 5 cysteine pairs are disulfide-bonded: C62/C156, C64/C80, C79/C138, C86/C131, and C115/C129. Ca(2+)-binding residues include G65 and G67. Residue H83 is part of the active site. D84 provides a ligand contact to Ca(2+). The active site involves D132.

This sequence belongs to the phospholipase A2 family. Requires Ca(2+) as cofactor.

The protein resides in the secreted. It is found in the nematocyst. It carries out the reaction a 1,2-diacyl-sn-glycero-3-phosphocholine + H2O = a 1-acyl-sn-glycero-3-phosphocholine + a fatty acid + H(+). In terms of biological role, sea anemone phospholipase A2 (PLA2) that may have a role both in defense and in digestion, since its expression and enzymatic activity were found both in the acontia (defensive organs) and tentacles. PLA2 catalyzes the calcium-dependent hydrolysis of the 2-acyl groups in 3-sn-phosphoglycerides. The polypeptide is Phospholipase A2 A2-hormotoxin-Apt1a (Adamsia palliata (Cloak anemone)).